The chain runs to 108 residues: Nucleoid-associated protein Mpe_A2533 (108 aa).

The interval 86-108 is disordered; the sequence is TSEEKMGKLTAGMPLPPGMKLPF. Residues 99–108 are compositionally biased toward pro residues; sequence PLPPGMKLPF.

This sequence belongs to the YbaB/EbfC family. As to quaternary structure, homodimer.

Its subcellular location is the cytoplasm. It localises to the nucleoid. Functionally, binds to DNA and alters its conformation. May be involved in regulation of gene expression, nucleoid organization and DNA protection. The sequence is that of Nucleoid-associated protein Mpe_A2533 from Methylibium petroleiphilum (strain ATCC BAA-1232 / LMG 22953 / PM1).